We begin with the raw amino-acid sequence, 544 residues long: Cytochrome P450 82A1 (544 aa).

A heme-binding site is contributed by cysteine 481.

The protein belongs to the cytochrome P450 family. Requires heme as cofactor.

The protein resides in the membrane. The sequence is that of Cytochrome P450 82A1 (CYP82A1) from Pisum sativum (Garden pea).